The primary structure comprises 142 residues: Large ribosomal subunit protein uL11 (142 aa).

Belongs to the universal ribosomal protein uL11 family. As to quaternary structure, part of the ribosomal stalk of the 50S ribosomal subunit. Interacts with L10 and the large rRNA to form the base of the stalk. L10 forms an elongated spine to which L12 dimers bind in a sequential fashion forming a multimeric L10(L12)X complex. Post-translationally, one or more lysine residues are methylated.

Its function is as follows. Forms part of the ribosomal stalk which helps the ribosome interact with GTP-bound translation factors. This is Large ribosomal subunit protein uL11 from Shewanella halifaxensis (strain HAW-EB4).